The chain runs to 458 residues: MKKLWGGRFQKTPEKWVDEFGASITFDQNLVKEDITGSLAHAAMLKKCGILTEEEEGAIRQGLQTLLQKAEEGTLEFSVDYEDIHLNIEKMLIEEIGPLGGKLHTGRSRNDQVATDMHLYLKDHVSHIIVLIEQFQKALIEKAEANVETILPGYTHLQRAQPISFAHHLLAYFWMLERDKERFRDAMKRINISPLGCGALAGTTFPIDRNYSAELLGFDSIYENSLDGVSDRDFILEFLSGSSMLMMHLSRLSEEIILWCSQEFRFIELDDTYATGSSMMPQKKNPDMAELIRGKTGRVYGDMMGLFTIMKGLPLAYNKDLQEDKEGMFDTVKTVEGSLQIFTGMIETMKVNKDIMKQATKQDFSNATELADYLAKKGMPFREAHEVVGKLVYSCIEKGIYLSDMAFEEFLQASSLFEEDIYTVLDPHHAVEKRMSAGGTGFQQVEQALVKAKACAGI.

It belongs to the lyase 1 family. Argininosuccinate lyase subfamily.

The protein resides in the cytoplasm. It catalyses the reaction 2-(N(omega)-L-arginino)succinate = fumarate + L-arginine. Its pathway is amino-acid biosynthesis; L-arginine biosynthesis; L-arginine from L-ornithine and carbamoyl phosphate: step 3/3. The sequence is that of Argininosuccinate lyase from Bacillus velezensis (strain DSM 23117 / BGSC 10A6 / LMG 26770 / FZB42) (Bacillus amyloliquefaciens subsp. plantarum).